The sequence spans 273 residues: Glucosamine-6-phosphate deaminase (273 aa).

Catalysis depends on aspartate 72, which acts as the Proton acceptor; for enolization step. The active-site For ring-opening step is aspartate 141. Histidine 143 functions as the Proton acceptor; for ring-opening step in the catalytic mechanism. Glutamate 148 (for ring-opening step) is an active-site residue.

Belongs to the glucosamine/galactosamine-6-phosphate isomerase family. As to quaternary structure, homohexamer.

The protein localises to the cytoplasm. It catalyses the reaction alpha-D-glucosamine 6-phosphate + H2O = beta-D-fructose 6-phosphate + NH4(+). It functions in the pathway nucleotide-sugar biosynthesis; UDP-N-acetyl-alpha-D-glucosamine biosynthesis; alpha-D-glucosamine 6-phosphate from D-fructose 6-phosphate: step 1/1. Catalyzes the reversible conversion of alpha-D-glucosamine 6-phosphate (GlcN-6P) into beta-D-fructose 6-phosphate (Fru-6P) and ammonium ion, a regulatory reaction step in de novo uridine diphosphate-N-acetyl-alpha-D-glucosamine (UDP-GlcNAc) biosynthesis via hexosamine pathway. The chain is Glucosamine-6-phosphate deaminase (Gnpda1) from Anopheles gambiae (African malaria mosquito).